Reading from the N-terminus, the 513-residue chain is Ankyrin repeat-containing protein YIL001W (513 aa).

ANK repeat units follow at residues 8-37 (KNFE…NVNS) and 41-70 (FDNS…VCDR). 2 BTB domains span residues 122-179 (RDIT…KFLY) and 274-360 (PDVQ…DIPW).

The chain is Ankyrin repeat-containing protein YIL001W from Saccharomyces cerevisiae (strain ATCC 204508 / S288c) (Baker's yeast).